A 379-amino-acid polypeptide reads, in one-letter code: Sterol 24-C-methyltransferase erg-4 (379 aa).

It belongs to the class I-like SAM-binding methyltransferase superfamily. Erg6/SMT family.

The catalysed reaction is lanosterol + S-adenosyl-L-methionine = eburicol + S-adenosyl-L-homocysteine + H(+). Its pathway is steroid metabolism; ergosterol biosynthesis. Catalyzes the methyl transfer from S-adenosyl-methionine to the C-24 of lanosterol to form eburicol. In Neurospora crassa (strain ATCC 24698 / 74-OR23-1A / CBS 708.71 / DSM 1257 / FGSC 987), this protein is Sterol 24-C-methyltransferase erg-4.